The chain runs to 396 residues: Flavohemoprotein (396 aa).

The Globin domain maps to 1–136 (MLDTQTIAIV…LADVFIQRES (136 aa)). Position 85 (His-85) interacts with heme b. Residues Tyr-95 and Glu-135 each act as charge relay system in the active site. The segment at 147 to 396 (GGWRTLRRFR…YECFGPHKVI (250 aa)) is reductase. Residues 150-255 (RTLRRFRIIK…APPRGDFFLD (106 aa)) form the FAD-binding FR-type domain. FAD contacts are provided by residues Tyr-188 and 204–207 (RQYS). Residue 268-273 (GVGQTP) participates in NADP(+) binding. An FAD-binding site is contributed by 389 to 392 (CFGP).

Belongs to the globin family. Two-domain flavohemoproteins subfamily. It in the C-terminal section; belongs to the flavoprotein pyridine nucleotide cytochrome reductase family. Requires heme b as cofactor. FAD serves as cofactor.

The catalysed reaction is 2 nitric oxide + NADPH + 2 O2 = 2 nitrate + NADP(+) + H(+). The enzyme catalyses 2 nitric oxide + NADH + 2 O2 = 2 nitrate + NAD(+) + H(+). In terms of biological role, is involved in NO detoxification in an aerobic process, termed nitric oxide dioxygenase (NOD) reaction that utilizes O(2) and NAD(P)H to convert NO to nitrate, which protects the bacterium from various noxious nitrogen compounds. Therefore, plays a central role in the inducible response to nitrosative stress. The protein is Flavohemoprotein of Yersinia pestis.